Consider the following 405-residue polypeptide: K(+)/H(+) antiporter subunit KhtU (405 aa).

Transmembrane regions (helical) follow at residues 3-23 (HLVF…VIAN), 29-49 (IIPF…KMGI), 60-80 (IIEF…GLEF), 85-105 (LIKS…INFS), 108-128 (LLYG…AGVI), 153-173 (LILG…SVVS), 183-203 (VGSA…FFIA), 222-242 (VFII…ETIH), 268-288 (LVVP…GLSI), 297-317 (VWLA…AGMV), 332-352 (IGLT…LGIA), and 357-377 (ATLK…GPLV).

It belongs to the monovalent cation:proton antiporter 2 (CPA2) transporter (TC 2.A.37) family. The transporter is composed of the integral membrane protein KhtU and the regulatory protein KhtT.

Its subcellular location is the cell membrane. With respect to regulation, potassium antiport activity requires the presence of KhtT. Activity is also modulated by KhtS. Has higher activity at alkaline pH. In terms of biological role, potassium/proton antiporter that mediates the efflux of potassium ions from the cell. Can also mediate rubidium/proton antiport, but has no permeability for sodium or lithium ions. In the absence of KhtT, does not have antiport activity, but can catalyze potassium efflux. Involved in protection of the cell from methylglyoxal, a toxic by-product of glycolysis, via activation by S-lactoyl-BSH of the antiporter activity, leading to cytoplasmic acidification and methylglyoxal resistance. The chain is K(+)/H(+) antiporter subunit KhtU from Bacillus subtilis (strain 168).